Here is a 575-residue protein sequence, read N- to C-terminus: Alpha-(1,6)-fucosyltransferase (575 aa).

Topologically, residues 1-9 (MRPWTGSWR) are cytoplasmic. A helical; Signal-anchor for type II membrane protein transmembrane segment spans residues 10–30 (WIMLILFAWGTLLFYIGGHLV). Residues 31-575 (RDNDHPDHSS…KVPHVPEAEK (545 aa)) are Lumenal-facing. Intrachain disulfides connect Cys204/Cys266, Cys212/Cys230, and Cys218/Cys222. The region spanning 206 to 493 (KAKKLVCNIN…PDASANFHSL (288 aa)) is the GT23 domain. A Phosphoserine modification is found at Ser278. An SH3-binding motif is present at residues 299–305 (PRPPYLP). Positions 365–366 (RR) are important for donor substrate binding. Residues Cys465 and Cys472 are joined by a disulfide bond. In terms of domain architecture, SH3 spans 502–563 (QNAHNQIAIY…PSYKVREKIE (62 aa)).

This sequence belongs to the glycosyltransferase 23 family. In terms of processing, tyrosine phosphorylated by PKDCC/VLK. Highest expression found in brain. Also found in heart, lung, spleen and kidney.

Its subcellular location is the golgi apparatus. The protein resides in the golgi stack membrane. The enzyme catalyses N(4)-{beta-D-GlcNAc-(1-&gt;2)-alpha-D-Man-(1-&gt;3)-[beta-D-GlcNAc-(1-&gt;2)-alpha-D-Man-(1-&gt;6)]-beta-D-Man-(1-&gt;4)-beta-D-GlcNAc-(1-&gt;4)-beta-D-GlcNAc}-L-asparaginyl-[protein] + GDP-beta-L-fucose = an N(4)-{beta-D-GlcNAc-(1-&gt;2)-alpha-D-Man-(1-&gt;3)-[beta-D-GlcNAc-(1-&gt;2)-alpha-D-Man-(1-&gt;6)]-beta-D-Man-(1-&gt;4)-beta-D-GlcNAc-(1-&gt;4)-[alpha-L-Fuc-(1-&gt;6)]-beta-D-GlcNAc}-L-asparaginyl-[protein] + GDP + H(+). It functions in the pathway protein modification; protein glycosylation. Functionally, catalyzes the addition of fucose in alpha 1-6 linkage to the first GlcNAc residue, next to the peptide chains in N-glycans. This is Alpha-(1,6)-fucosyltransferase (FUT8) from Bos taurus (Bovine).